The chain runs to 258 residues: MGVEKIKAAFENGKKAFIPYVMGGDGGFEKLKERIRFLDEAGASIVEIGIPFSDPVADGPTIQRAGKRALDSGVTVKGIFQALIEVRKEVQIPFVLMTYLNPVLAFGKERFIENCIEAGVDGIIVPDLPYEEQNIIASLLREVNIALIPLVTVTSPIERIEKITSESEGFVYAVTVAGVTGVRQNFKEEIHSYLEKVKSHVNLPVVAGFGISTKEHVEEMVTICDGVVVGSKVIELLENEKREEICELIYATKQKEEA.

Catalysis depends on proton acceptor residues Glu-47 and Asp-58.

The protein belongs to the TrpA family. Tetramer of two alpha and two beta chains.

The catalysed reaction is (1S,2R)-1-C-(indol-3-yl)glycerol 3-phosphate + L-serine = D-glyceraldehyde 3-phosphate + L-tryptophan + H2O. Its pathway is amino-acid biosynthesis; L-tryptophan biosynthesis; L-tryptophan from chorismate: step 5/5. In terms of biological role, the alpha subunit is responsible for the aldol cleavage of indoleglycerol phosphate to indole and glyceraldehyde 3-phosphate. This Bacillus cereus (strain B4264) protein is Tryptophan synthase alpha chain.